The sequence spans 720 residues: Long chain acyl-CoA synthetase 8 (720 aa).

Methionine 1 bears the N-acetylmethionine mark. Residue 279-290 (IMFTSGSTGLPK) participates in ATP binding. A fatty acid-binding region spans residues 554–582 (DEKGTRWFYTGDIGRFHPDGCLEVIDRKK).

This sequence belongs to the ATP-dependent AMP-binding enzyme family. Requires Mg(2+) as cofactor.

It carries out the reaction a long-chain fatty acid + ATP + CoA = a long-chain fatty acyl-CoA + AMP + diphosphate. It participates in lipid metabolism; fatty acid metabolism. Activation of long-chain fatty acids for both synthesis of cellular lipids, and degradation via beta-oxidation. Preferentially uses palmitate, palmitoleate, oleate and linoleate. The chain is Long chain acyl-CoA synthetase 8 (LACS8) from Arabidopsis thaliana (Mouse-ear cress).